A 238-amino-acid polypeptide reads, in one-letter code: NADH-quinone oxidoreductase subunit C (238 aa).

Over residues 1–11 (MSTSNGSANGT) the composition is skewed to polar residues. A disordered region spans residues 1-20 (MSTSNGSANGTNGVGLPRGD).

This sequence belongs to the complex I 30 kDa subunit family. In terms of assembly, NDH-1 is composed of 14 different subunits. Subunits NuoB, C, D, E, F, and G constitute the peripheral sector of the complex.

It is found in the cell membrane. The enzyme catalyses a quinone + NADH + 5 H(+)(in) = a quinol + NAD(+) + 4 H(+)(out). Functionally, NDH-1 shuttles electrons from NADH, via FMN and iron-sulfur (Fe-S) centers, to quinones in the respiratory chain. The immediate electron acceptor for the enzyme in this species is believed to be a menaquinone. Couples the redox reaction to proton translocation (for every two electrons transferred, four hydrogen ions are translocated across the cytoplasmic membrane), and thus conserves the redox energy in a proton gradient. This Mycolicibacterium smegmatis (strain ATCC 700084 / mc(2)155) (Mycobacterium smegmatis) protein is NADH-quinone oxidoreductase subunit C.